The following is a 72-amino-acid chain: DNA-directed RNA polymerase subunit epsilon (72 aa).

The protein belongs to the RNA polymerase subunit epsilon family. As to quaternary structure, RNAP is composed of a core of 2 alpha, a beta and a beta' subunit. The core is associated with a delta subunit, and at least one of epsilon or omega. When a sigma factor is associated with the core the holoenzyme is formed, which can initiate transcription.

It carries out the reaction RNA(n) + a ribonucleoside 5'-triphosphate = RNA(n+1) + diphosphate. Its function is as follows. A non-essential component of RNA polymerase (RNAP). In Lactiplantibacillus plantarum (strain ATCC BAA-793 / NCIMB 8826 / WCFS1) (Lactobacillus plantarum), this protein is DNA-directed RNA polymerase subunit epsilon.